The following is a 523-amino-acid chain: WD repeat-containing protein YPL247C (523 aa).

Residues 1–64 (MDPFHNGNKR…TTNGGNSKRN (64 aa)) are disordered. The span at 9–40 (KRSSISFGSSQRQPYNKNNYLSGTNGPSSAAQ) shows a compositional bias: polar residues. Ser47 carries the phosphoserine modification. Residues 52 to 64 (SGNTTNGGNSKRN) are compositionally biased toward low complexity. Residue Ser65 is modified to Phosphoserine. WD repeat units lie at residues 173–213 (DVVY…RQFQ), 241–281 (GTFP…YVKT), 285–325 (AHDS…HSTI), and 392–432 (GHGS…MEIN). Residues 436 to 472 (SKSPSIHGTSLEDPDGDTEMTDGGAGSGLNEDPLSLN) are disordered.

It belongs to the WD repeat WDR68 family.

The protein resides in the cytoplasm. The protein localises to the nucleus. The chain is WD repeat-containing protein YPL247C from Saccharomyces cerevisiae (strain ATCC 204508 / S288c) (Baker's yeast).